The chain runs to 644 residues: Macrolide export ATP-binding/permease protein MacB (644 aa).

An ABC transporter domain is found at 4–242; it reads IECKNINRYF…SNVGRIQEKA (239 aa). 40-47 lines the ATP pocket; sequence GQSGSGKS. Transmembrane regions (helical) follow at residues 270 to 290, 524 to 544, 574 to 594, and 607 to 627; these read LLTMLGIIIGIASVVSVVALG, IALISLVVGGIGVMNIMLVSV, LICVIGGLVGVGLSAAVSLVF, and AMSVIGAVACSTGIGIAFGFM.

This sequence belongs to the ABC transporter superfamily. Macrolide exporter (TC 3.A.1.122) family. Homodimer.

It localises to the cell inner membrane. Non-canonical ABC transporter that contains transmembrane domains (TMD), which form a pore in the inner membrane, and an ATP-binding domain (NBD), which is responsible for energy generation. Confers resistance against macrolides. The chain is Macrolide export ATP-binding/permease protein MacB from Neisseria meningitidis serogroup A / serotype 4A (strain DSM 15465 / Z2491).